The sequence spans 146 residues: Hemoglobin subunit beta (146 aa).

N-acetylvaline is present on valine 1. The region spanning 2 to 146 (HLSGEEKGAV…VATALAHKYH (145 aa)) is the Globin domain. The residue at position 12 (threonine 12) is a Phosphothreonine. Serine 44 is subject to Phosphoserine. Lysine 59 bears the N6-acetyllysine mark. Residue histidine 63 participates in heme b binding. Lysine 82 is modified (N6-acetyllysine). Heme b is bound at residue histidine 92. Position 93 is an S-nitrosocysteine (cysteine 93). N6-acetyllysine is present on lysine 144.

This sequence belongs to the globin family. Heterotetramer of two alpha chains and two beta chains. Red blood cells.

Functionally, involved in oxygen transport from the lung to the various peripheral tissues. The protein is Hemoglobin subunit beta (HBB) of Tadarida brasiliensis (Brazilian free-tailed bat).